We begin with the raw amino-acid sequence, 274 residues long: Ceramide synthase (274 aa).

Residues 34 to 261 form the TLC domain; it reads ADAVIVSARL…ICRGACRLFW (228 aa). Helical transmembrane passes span 130 to 150, 159 to 179, 194 to 214, and 223 to 243; these read FLMV…SVVW, LGCM…KILI, ALML…LYWA, and LLAV…LLLA.

In terms of tissue distribution, expressed in testis. Expressed in the retina with higher expression levels in the macular than in the peripheral region.

It localises to the golgi apparatus membrane. The protein localises to the endoplasmic reticulum membrane. It carries out the reaction sphing-4-enine + octadecanoyl-CoA = N-octadecanoylsphing-4-enine + CoA + H(+). It catalyses the reaction eicosanoyl-CoA + sphing-4-enine = N-eicosanoyl-sphing-4-enine + CoA + H(+). The enzyme catalyses sphing-4-enine + hexadecanoyl-CoA = N-hexadecanoylsphing-4-enine + CoA + H(+). Involved in ceramide synthesis. This is Ceramide synthase from Homo sapiens (Human).